Consider the following 200-residue polypeptide: Small ribosomal subunit protein uS4 (200 aa).

An S4 RNA-binding domain is found at 92–155 (SRLDAVVYQL…QKLNIIAESV (64 aa)).

The protein belongs to the universal ribosomal protein uS4 family. In terms of assembly, part of the 30S ribosomal subunit. Contacts protein S5. The interaction surface between S4 and S5 is involved in control of translational fidelity.

Its function is as follows. One of the primary rRNA binding proteins, it binds directly to 16S rRNA where it nucleates assembly of the body of the 30S subunit. Functionally, with S5 and S12 plays an important role in translational accuracy. The polypeptide is Small ribosomal subunit protein uS4 (Macrococcus caseolyticus (strain JCSC5402) (Macrococcoides caseolyticum)).